The primary structure comprises 427 residues: Trigger factor (427 aa).

The PPIase FKBP-type domain occupies 163-248 (GDTVVIDFVG…IHEVKTKEVP (86 aa)).

This sequence belongs to the FKBP-type PPIase family. Tig subfamily.

It is found in the cytoplasm. It catalyses the reaction [protein]-peptidylproline (omega=180) = [protein]-peptidylproline (omega=0). Its function is as follows. Involved in protein export. Acts as a chaperone by maintaining the newly synthesized protein in an open conformation. Functions as a peptidyl-prolyl cis-trans isomerase. The polypeptide is Trigger factor (Streptococcus agalactiae serotype Ia (strain ATCC 27591 / A909 / CDC SS700)).